The primary structure comprises 489 residues: Cytochrome P450 monooxygenase bfoB (489 aa).

An N-terminal signal peptide occupies residues 1-18 (MLALYLIAGLLVGLLVYR). N-linked (GlcNAc...) asparagine glycans are attached at residues Asn113, Asn348, and Asn386. Position 429 (Cys429) interacts with heme.

Belongs to the cytochrome P450 family. Heme is required as a cofactor.

It catalyses the reaction 2 fonsecin B + NADPH + O2 + H(+) = bifonsecin B + NADP(+) + 2 H2O. It carries out the reaction 2 rubrofusarin B + NADPH + O2 + 3 H(+) = nigerone + NADP(+) + 2 H2O. The protein operates within secondary metabolite biosynthesis. In terms of biological role, cytochrome P450 monooxygenase; part of the gene cluster that mediates the biosynthesis of bifonsecin B, a dimeric gamma-naphthopyrone. The first step in the biosynthesis of bifonsecin B is the production of gamma-naphthopyrone precursor YWA1 by the non-reducing polyketide synthase albA, via condensation of one acetyl-CoA starter unit with 6 malonyl-CoA units. YWA1 is then methylated by bfoE at position C-6 to yield foncesin which is further methylated at position C-8 by bfoD to produce fonsecin B. A key enzyme in the biosynthetic pathway is the cytochrome P450 monooxygenase bfoB which catalyzes the oxidative dimerization of fonsecin B to bifonsecin B. Bfob also catalyzes the oxidative dimerization of rubrofusarin B into nigerone. The stereoselectivity of bfoB is influenced by the two natural monomeric substrates; homodimerization of fonsecin B yields a stereochemically pure biaryl, M-foncerine B, while rubrofusarin B yields a mixture of enantiomers M- and P-nigerone. The sequence is that of Cytochrome P450 monooxygenase bfoB from Aspergillus brasiliensis (strain CBS 101740 / IMI 381727 / IBT 21946).